An 89-amino-acid polypeptide reads, in one-letter code: Small ribosomal subunit protein uS17 (89 aa).

Belongs to the universal ribosomal protein uS17 family. As to quaternary structure, part of the 30S ribosomal subunit.

In terms of biological role, one of the primary rRNA binding proteins, it binds specifically to the 5'-end of 16S ribosomal RNA. This Ralstonia pickettii (strain 12J) protein is Small ribosomal subunit protein uS17.